The following is a 597-amino-acid chain: Bromodomain-containing protein 9 (597 aa).

The segment covering 1 to 10 (MGKKHKKHKA) has biased composition (basic residues). 2 disordered regions span residues 1 to 25 (MGKKHKKHKAEWRSSYEDYADKPLE) and 38 to 138 (EVTE…ENES). Composition is skewed to basic and acidic residues over residues 11–25 (EWRSSYEDYADKPLE) and 50–62 (SYYDDRSDHERER). Position 56 is a phosphoserine (serine 56). Positions 63-73 (HKEKKKKKKKK) are enriched in basic residues. Positions 74–85 (SEKEKHLDDEER) are enriched in basic and acidic residues. Residues 86 to 97 (RKRKEEKKRKRE) show a composition bias toward basic residues. Residues 111–126 (DPGKKVEVEPPPDRPV) show a composition bias toward basic and acidic residues. Residues 136-240 (NESTPIQQLL…HAGFKMMSKQ (105 aa)) enclose the Bromo domain. Residues 214–216 (TYN) form a histone H4K5ac H4K8ac and histone H4K5bu H4K8bu binding region. An N6-acetyllysine; alternate modification is found at lysine 373. Residue lysine 373 forms a Glycyl lysine isopeptide (Lys-Gly) (interchain with G-Cter in SUMO2); alternate linkage. Residues 536 to 597 (EAQAERGGSR…SPEPAASAKT (62 aa)) form a disordered region. A compositionally biased stretch (low complexity) spans 544 to 556 (SRPSSNLSSLSNA). Serine 566 and serine 588 each carry phosphoserine.

As to quaternary structure, binds acetylated histones H3 and H4. Binds butyrylated histone H4. Component of the multiprotein chromatin-remodeling subcomplex SWI/SNF called GBAF, which includes at least BICRA or BICRAL (mutually exclusive), BRD9, SS18, the core BAF subunits, SMARCA2/BRM, SMARCA4/BRG1/BAF190A, ACTL6A/BAF53, SMARCC1/BAF155, and SMARCD1/BAF60A. Interacts (via N-terminal bromodomain) with acetylated RAD54. Interacts (via C-terminus) with RAD51.

The protein resides in the nucleus. Its function is as follows. Plays a role in chromatin remodeling and regulation of transcription. Acts as a chromatin reader that recognizes and binds acylated histones: binds histones that are acetylated and/or butyrylated. Component of SWI/SNF chromatin remodeling subcomplex GBAF that carries out key enzymatic activities, changing chromatin structure by altering DNA-histone contacts within a nucleosome in an ATP-dependent manner. Also orchestrates the RAD51-RAD54 complex formation and thereby plays a role in homologous recombination (HR). In Homo sapiens (Human), this protein is Bromodomain-containing protein 9 (BRD9).